Here is a 305-residue protein sequence, read N- to C-terminus: Olfactory receptor 4B13 (305 aa).

Residues 1–25 (MANKNNVTELIFTGLFQDPEVQKVC) lie on the Extracellular side of the membrane. Asn6 carries an N-linked (GlcNAc...) asparagine glycan. Residues 26 to 46 (FVLFLPVYLATLLGNSLILVA) form a helical membrane-spanning segment. The Cytoplasmic segment spans residues 47-55 (VSISKTLHS). The helical transmembrane segment at 56–76 (PMYFFLSSLSLVEICYSSTIV) threads the bilayer. Topologically, residues 77–95 (PKFITDLLAKVKTISLKGC) are extracellular. The cysteines at positions 95 and 187 are disulfide-linked. Residues 96–116 (LTQIFFSHFFGVVEVILLVVM) form a helical membrane-spanning segment. At 117-141 (AYDRYVAICKPLHYMNIMSRQVCHM) the chain is on the cytoplasmic side. The helical transmembrane segment at 142-162 (LVAGSWLGGFIHSIIQIIITI) threads the bilayer. The Extracellular segment spans residues 163-202 (PLPFCGPNVIDHYFCDLQQLFKLACTDTFMEGFIVMANSG). The helical transmembrane segment at 203–223 (LISIVSLFILVSSYAVILISL) threads the bilayer. Residues 224-236 (RKRSAEGRRKALS) are Cytoplasmic-facing. The chain crosses the membrane as a helical span at residues 237-257 (TCASHITVVILFFVPGAFIYM). The Extracellular portion of the chain corresponds to 258–266 (RPSSTFTED). Residues 267–287 (KLVSVFYTVITPMLNPIVYTL) form a helical membrane-spanning segment. The Cytoplasmic segment spans residues 288–305 (RNTEMKNAIRMSWKQKDS).

The protein belongs to the G-protein coupled receptor 1 family.

It is found in the cell membrane. Functionally, odorant receptor. This is Olfactory receptor 4B13 from Mus musculus (Mouse).